The sequence spans 423 residues: Histidine--tRNA ligase (423 aa).

This sequence belongs to the class-II aminoacyl-tRNA synthetase family. Homodimer.

The protein resides in the cytoplasm. It catalyses the reaction tRNA(His) + L-histidine + ATP = L-histidyl-tRNA(His) + AMP + diphosphate + H(+). This chain is Histidine--tRNA ligase, found in Orientia tsutsugamushi (strain Ikeda) (Rickettsia tsutsugamushi).